Consider the following 717-residue polypeptide: Translation initiation factor eIF2B subunit epsilon (717 aa).

Residues 1-14 (MAATAAVPGAAAGR) are compositionally biased toward low complexity. The disordered stretch occupies residues 1-37 (MAATAAVPGAAAGRASKRGGGGSGGGGTQGAEEEPPP). An Omega-N-methylarginine modification is found at R18. Positions 18-29 (RGGGGSGGGGTQ) are enriched in gly residues. Position 23 is a phosphoserine (S23). Glycyl lysine isopeptide (Lys-Gly) (interchain with G-Cter in ubiquitin) cross-links involve residues K57 and K99. Position 126 is a phosphoserine (S126). Glycyl lysine isopeptide (Lys-Gly) (interchain with G-Cter in ubiquitin) cross-links involve residues K137 and K213. T318 is subject to Phosphothreonine. A disordered region spans residues 442 to 479 (GSVISLHPPDAEEDEDDGQFSDDSGADQEKEKVKLKGY). Residues S446, S462, and S465 each carry the phosphoserine modification. Residues 452 to 467 (AEEDEDDGQFSDDSGA) show a composition bias toward acidic residues. A Glycyl lysine isopeptide (Lys-Gly) (interchain with G-Cter in ubiquitin) cross-link involves residue K501. The interval 517–538 (TEEESETESEGSVDPEELDSRA) is disordered. A compositionally biased stretch (acidic residues) spans 519–533 (EESETESEGSVDPEE). 2 positions are modified to phosphoserine: S528 and S536. Positions 539-716 (GSPQLDDIRV…REAEEESSED (178 aa)) constitute a W2 domain. S540 is subject to Phosphoserine; by DYRK2. The residue at position 713 (S713) is a Phosphoserine.

It belongs to the eIF-2B gamma/epsilon subunits family. Component of the translation initiation factor 2B (eIF2B) complex which is a heterodecamer of two sets of five different subunits: alpha, beta, gamma, delta and epsilon. Subunits alpha, beta and delta comprise a regulatory subcomplex and subunits epsilon and gamma comprise a catalytic subcomplex. Within the complex, the hexameric regulatory complex resides at the center, with the two heterodimeric catalytic subcomplexes bound on opposite sides. Post-translationally, phosphorylated at Ser-540 by DYRK2; this is required for subsequent phosphorylation by GSK3B. Phosphorylated on serine and threonine residues by GSK3B; phosphorylation inhibits its function. Polyubiquitinated, probably by NEDD4.

Its subcellular location is the cytoplasm. The protein resides in the cytosol. Activated by the chemical integrated stress response (ISR) inhibitor ISRIB which stimulates guanine nucleotide exchange factor activity for both phosphorylated and unphosphorylated eIF2. In terms of biological role, acts as a component of the translation initiation factor 2B (eIF2B) complex, which catalyzes the exchange of GDP for GTP on eukaryotic initiation factor 2 (eIF2) gamma subunit. Its guanine nucleotide exchange factor activity is repressed when bound to eIF2 complex phosphorylated on the alpha subunit, thereby limiting the amount of methionyl-initiator methionine tRNA available to the ribosome and consequently global translation is repressed. This Mus musculus (Mouse) protein is Translation initiation factor eIF2B subunit epsilon (Eif2b5).